A 396-amino-acid polypeptide reads, in one-letter code: Mannonate dehydratase (396 aa).

This sequence belongs to the mannonate dehydratase family. Requires Fe(2+) as cofactor. Mn(2+) serves as cofactor.

The enzyme catalyses D-mannonate = 2-dehydro-3-deoxy-D-gluconate + H2O. It participates in carbohydrate metabolism; pentose and glucuronate interconversion. Its function is as follows. Catalyzes the dehydration of D-mannonate. In Yersinia enterocolitica serotype O:8 / biotype 1B (strain NCTC 13174 / 8081), this protein is Mannonate dehydratase.